Here is a 419-residue protein sequence, read N- to C-terminus: Tyrosine--tRNA ligase (419 aa).

Position 42 (Tyr-42) interacts with L-tyrosine. A 'HIGH' region motif is present at residues 47 to 56 (ATAPSLHVGS). L-tyrosine is bound by residues Tyr-179 and Gln-183. Positions 239-243 (KMGKT) match the 'KMSKS' region motif. Position 242 (Lys-242) interacts with ATP. One can recognise an S4 RNA-binding domain in the interval 353–418 (VVLAALFADA…GKKKIVLVKP (66 aa)).

Belongs to the class-I aminoacyl-tRNA synthetase family. TyrS type 1 subfamily. In terms of assembly, homodimer.

It is found in the cytoplasm. It catalyses the reaction tRNA(Tyr) + L-tyrosine + ATP = L-tyrosyl-tRNA(Tyr) + AMP + diphosphate + H(+). Catalyzes the attachment of tyrosine to tRNA(Tyr) in a two-step reaction: tyrosine is first activated by ATP to form Tyr-AMP and then transferred to the acceptor end of tRNA(Tyr). The protein is Tyrosine--tRNA ligase of Caulobacter vibrioides (strain ATCC 19089 / CIP 103742 / CB 15) (Caulobacter crescentus).